We begin with the raw amino-acid sequence, 458 residues long: Bifunctional protein GlmU (458 aa).

The segment at 1–232 (MTSSLSVIIL…TFEIEGVNNR (232 aa)) is pyrophosphorylase. Residues 10–13 (LAAG), lysine 24, glutamine 79, 84–85 (GT), 106–108 (YGD), glycine 142, glutamate 157, asparagine 172, and asparagine 230 each bind UDP-N-acetyl-alpha-D-glucosamine. Aspartate 108 lines the Mg(2+) pocket. Asparagine 230 contributes to the Mg(2+) binding site. Positions 233 to 253 (QQLASLERTWQGKLVADLQEA) are linker. The interval 254–458 (GVQFADPTRV…KNDFKRPTKK (205 aa)) is N-acetyltransferase. UDP-N-acetyl-alpha-D-glucosamine contacts are provided by arginine 336 and lysine 354. Histidine 366 acts as the Proton acceptor in catalysis. Tyrosine 369 and asparagine 380 together coordinate UDP-N-acetyl-alpha-D-glucosamine. Acetyl-CoA-binding positions include alanine 383, 389–390 (NY), serine 408, alanine 426, and arginine 443.

It in the N-terminal section; belongs to the N-acetylglucosamine-1-phosphate uridyltransferase family. This sequence in the C-terminal section; belongs to the transferase hexapeptide repeat family. Homotrimer. Requires Mg(2+) as cofactor.

It is found in the cytoplasm. The catalysed reaction is alpha-D-glucosamine 1-phosphate + acetyl-CoA = N-acetyl-alpha-D-glucosamine 1-phosphate + CoA + H(+). The enzyme catalyses N-acetyl-alpha-D-glucosamine 1-phosphate + UTP + H(+) = UDP-N-acetyl-alpha-D-glucosamine + diphosphate. It participates in nucleotide-sugar biosynthesis; UDP-N-acetyl-alpha-D-glucosamine biosynthesis; N-acetyl-alpha-D-glucosamine 1-phosphate from alpha-D-glucosamine 6-phosphate (route II): step 2/2. Its pathway is nucleotide-sugar biosynthesis; UDP-N-acetyl-alpha-D-glucosamine biosynthesis; UDP-N-acetyl-alpha-D-glucosamine from N-acetyl-alpha-D-glucosamine 1-phosphate: step 1/1. It functions in the pathway bacterial outer membrane biogenesis; LPS lipid A biosynthesis. Its function is as follows. Catalyzes the last two sequential reactions in the de novo biosynthetic pathway for UDP-N-acetylglucosamine (UDP-GlcNAc). The C-terminal domain catalyzes the transfer of acetyl group from acetyl coenzyme A to glucosamine-1-phosphate (GlcN-1-P) to produce N-acetylglucosamine-1-phosphate (GlcNAc-1-P), which is converted into UDP-GlcNAc by the transfer of uridine 5-monophosphate (from uridine 5-triphosphate), a reaction catalyzed by the N-terminal domain. In Psychrobacter cryohalolentis (strain ATCC BAA-1226 / DSM 17306 / VKM B-2378 / K5), this protein is Bifunctional protein GlmU.